The chain runs to 195 residues: Imidazoleglycerol-phosphate dehydratase (195 aa).

Belongs to the imidazoleglycerol-phosphate dehydratase family.

It is found in the cytoplasm. It catalyses the reaction D-erythro-1-(imidazol-4-yl)glycerol 3-phosphate = 3-(imidazol-4-yl)-2-oxopropyl phosphate + H2O. Its pathway is amino-acid biosynthesis; L-histidine biosynthesis; L-histidine from 5-phospho-alpha-D-ribose 1-diphosphate: step 6/9. The chain is Imidazoleglycerol-phosphate dehydratase from Cupriavidus metallidurans (strain ATCC 43123 / DSM 2839 / NBRC 102507 / CH34) (Ralstonia metallidurans).